We begin with the raw amino-acid sequence, 176 residues long: Shikimate kinase (176 aa).

Residue 14 to 19 (GAGKST) coordinates ATP. Residue S18 coordinates Mg(2+). The substrate site is built by D36, R60, and G83. Position 121 (R121) interacts with ATP. A substrate-binding site is contributed by R140.

This sequence belongs to the shikimate kinase family. Monomer. Mg(2+) serves as cofactor.

The protein localises to the cytoplasm. The catalysed reaction is shikimate + ATP = 3-phosphoshikimate + ADP + H(+). Its pathway is metabolic intermediate biosynthesis; chorismate biosynthesis; chorismate from D-erythrose 4-phosphate and phosphoenolpyruvate: step 5/7. Its function is as follows. Catalyzes the specific phosphorylation of the 3-hydroxyl group of shikimic acid using ATP as a cosubstrate. The protein is Shikimate kinase of Francisella tularensis subsp. holarctica (strain FTNF002-00 / FTA).